A 196-amino-acid chain; its full sequence is Putative NADH dehydrogenase/NAD(P)H nitroreductase SGR_2476 (196 aa).

It belongs to the nitroreductase family. HadB/RutE subfamily. It depends on FMN as a cofactor.

The chain is Putative NADH dehydrogenase/NAD(P)H nitroreductase SGR_2476 from Streptomyces griseus subsp. griseus (strain JCM 4626 / CBS 651.72 / NBRC 13350 / KCC S-0626 / ISP 5235).